The sequence spans 134 residues: Profilin-2 (134 aa).

Cys-13 and Cys-118 are disulfide-bonded. Residues 84-100 (AVIRGKKGSGGITIKKT) carry the Involved in PIP2 interaction motif. Thr-114 is subject to Phosphothreonine.

Belongs to the profilin family. In terms of assembly, occurs in many kinds of cells as a complex with monomeric actin in a 1:1 ratio. Phosphorylated by MAP kinases.

The protein localises to the cytoplasm. It localises to the cytoskeleton. In terms of biological role, binds to actin and affects the structure of the cytoskeleton. At high concentrations, profilin prevents the polymerization of actin, whereas it enhances it at low concentrations. The chain is Profilin-2 from Olea europaea (Common olive).